The following is a 193-amino-acid chain: GDP-mannose pyrophosphatase (193 aa).

GDP-alpha-D-mannose-binding positions include 38 to 40 (IRE), Arg67, and 85 to 87 (AGL). The Nudix hydrolase domain maps to 43-180 (DRGDGATILL…RIKDGKTIML (138 aa)). Ala85, Glu100, and Glu104 together coordinate Mg(2+). The Nudix box signature appears at 86 to 106 (GLLDDYSPEECIRNEAIEETG). GDP-alpha-D-mannose is bound by residues Glu104, Glu127, 150–151 (DE), and Lys176. Glu151 contacts Mg(2+).

Belongs to the Nudix hydrolase family. NudK subfamily. Homodimer. Mg(2+) is required as a cofactor.

The enzyme catalyses GDP-alpha-D-mannose + H2O = alpha-D-mannose 1-phosphate + GMP + 2 H(+). Functionally, nucleoside diphosphate sugar hydrolase that hydrolyzes GDP-mannose as its preferred substrate, yielding GMP and mannose-1-phosphate. This chain is GDP-mannose pyrophosphatase (nudK), found in Pectobacterium atrosepticum (strain SCRI 1043 / ATCC BAA-672) (Erwinia carotovora subsp. atroseptica).